Consider the following 755-residue polypeptide: Biodegradative arginine decarboxylase (755 aa).

Lys386 carries the N6-(pyridoxal phosphate)lysine modification.

This sequence belongs to the Orn/Lys/Arg decarboxylase class-I family. Homodecamer. The basic unit is a homodimer, organized into a ring of giving a pentamer of five homodimers. Requires pyridoxal 5'-phosphate as cofactor.

The protein resides in the cytoplasm. It catalyses the reaction L-arginine + H(+) = agmatine + CO2. Its activity is regulated as follows. Homodimers are probably inactive, their assembly into a homodecamer at low pH requires neutralization of negatively charged residues. This uses cytoplasmic protons, contributing pH regulation and stabilizes the homodecamer. In terms of biological role, component of the acid-resistance (AR) system allowing enteric pathogens to survive the acidic environment in the stomach. ADC can be found in two forms: biodegradative (this enzyme) and biosynthetic (speA). The biodegradative form plays a role in regulating pH by consuming proteins. Converts arginine imported by AdiC to agmatine which is then exported by AdiC. This chain is Biodegradative arginine decarboxylase (adiA), found in Escherichia coli (strain K12).